The primary structure comprises 375 residues: tRNA-specific 2-thiouridylase MnmA (375 aa).

ATP-binding positions include 12–19 (GMSGGVDS) and Met-38. Positions 98 to 100 (NPD) are interaction with target base in tRNA. The active-site Nucleophile is the Cys-103. Cysteines 103 and 200 form a disulfide. An ATP-binding site is contributed by Gly-127. Residues 150–152 (KDQ) are interaction with tRNA. Residue Cys-200 is the Cysteine persulfide intermediate of the active site. The interval 312 to 313 (RY) is interaction with tRNA.

Belongs to the MnmA/TRMU family.

Its subcellular location is the cytoplasm. It carries out the reaction S-sulfanyl-L-cysteinyl-[protein] + uridine(34) in tRNA + AH2 + ATP = 2-thiouridine(34) in tRNA + L-cysteinyl-[protein] + A + AMP + diphosphate + H(+). In terms of biological role, catalyzes the 2-thiolation of uridine at the wobble position (U34) of tRNA, leading to the formation of s(2)U34. This is tRNA-specific 2-thiouridylase MnmA from Lactobacillus gasseri (strain ATCC 33323 / DSM 20243 / BCRC 14619 / CIP 102991 / JCM 1131 / KCTC 3163 / NCIMB 11718 / NCTC 13722 / AM63).